The chain runs to 271 residues: MISIQNLTFYYGCNPILKDLNLTIQNNSWVSIVGHNGSGKSTLAKILVGLLSCTKGQILIDNIVLNEKNLPLLRPKIGMVFQNPDYQFTGLTVREDIAFGLENHNVCREEIIAKVWQYAKMVKIDDLLDTNVNQLSGGQKQRVAIASILAMEPEIIIFDEVTSFLDPQGALEVQKIIQTIKNKILITITHDLEFAAKSDEIIVLDQGKLITQTPPQNLFQDPLFLQQYKLNPPLSLELYYEILKDSTTKNIKNNQMLENLKDILWQYNLKK.

An ABC transporter domain is found at 2–231 (ISIQNLTFYY…PLFLQQYKLN (230 aa)). 34–41 (GHNGSGKS) lines the ATP pocket.

Belongs to the ABC transporter superfamily. Energy-coupling factor EcfA family. In terms of assembly, forms a stable energy-coupling factor (ECF) transporter complex composed of 2 membrane-embedded substrate-binding proteins (S component), 2 ATP-binding proteins (A component) and 2 transmembrane proteins (T component).

Its subcellular location is the cell membrane. Its function is as follows. ATP-binding (A) component of a common energy-coupling factor (ECF) ABC-transporter complex. Unlike classic ABC transporters this ECF transporter provides the energy necessary to transport a number of different substrates. This chain is Energy-coupling factor transporter ATP-binding protein EcfA, found in Onion yellows phytoplasma (strain OY-M).